Consider the following 216-residue polypeptide: Uridine kinase (216 aa).

16-23 (GASASGKS) lines the ATP pocket.

The protein belongs to the uridine kinase family.

It is found in the cytoplasm. It carries out the reaction uridine + ATP = UMP + ADP + H(+). It catalyses the reaction cytidine + ATP = CMP + ADP + H(+). It functions in the pathway pyrimidine metabolism; CTP biosynthesis via salvage pathway; CTP from cytidine: step 1/3. The protein operates within pyrimidine metabolism; UMP biosynthesis via salvage pathway; UMP from uridine: step 1/1. In Pasteurella multocida (strain Pm70), this protein is Uridine kinase.